The primary structure comprises 265 residues: Chalcone synthase (265 aa).

C40 is a catalytic residue.

The protein belongs to the thiolase-like superfamily. Chalcone/stilbene synthases family.

It catalyses the reaction (E)-4-coumaroyl-CoA + 3 malonyl-CoA + 3 H(+) = 2',4,4',6'-tetrahydroxychalcone + 3 CO2 + 4 CoA. It participates in secondary metabolite biosynthesis; flavonoid biosynthesis. The primary product of this enzyme is 4,2',4',6'-tetrahydroxychalcone (also termed naringenin-chalcone or chalcone) which can under specific conditions spontaneously isomerize into naringenin. The sequence is that of Chalcone synthase (CHSII) from Medicago sativa (Alfalfa).